The sequence spans 170 residues: Cysteine-rich uncharacterized protein 241L (170 aa).

The protein is Cysteine-rich uncharacterized protein 241L of Acheta domesticus (House cricket).